A 112-amino-acid polypeptide reads, in one-letter code: Large ribosomal subunit protein bL17 (112 aa).

Belongs to the bacterial ribosomal protein bL17 family. In terms of assembly, part of the 50S ribosomal subunit. Contacts protein L32.

The sequence is that of Large ribosomal subunit protein bL17 from Desulfitobacterium hafniense (strain DSM 10664 / DCB-2).